The primary structure comprises 1167 residues: Non-toxic nonhemagglutinin (1167 aa).

The interval M1–N381 is light chain nLC. The tract at residues N382–I804 is N-heavy chain nHN. Residues K805–I1167 are C-heavy chain nHC.

This sequence belongs to the botulism non-toxic nonhemagglutinin family.

Expression of the ptox operon (ntnh-orfX1-orfX2-orfX3-pmp1) in B.thuringiensis kills Anopheles but not Aedes mosquito 3rd instar larvae. The ntnh-pmp1 construct is about half as toxic. The sequence is that of Non-toxic nonhemagglutinin from Paraclostridium bifermentans (Clostridium bifermentans).